The following is a 157-amino-acid chain: Serine-protein kinase RsbW (157 aa).

The protein belongs to the anti-sigma-factor family.

The catalysed reaction is L-seryl-[protein] + ATP = O-phospho-L-seryl-[protein] + ADP + H(+). It catalyses the reaction L-threonyl-[protein] + ATP = O-phospho-L-threonyl-[protein] + ADP + H(+). Negative regulator of sigma-B activity. Phosphorylates and inactivates its specific antagonist protein, RsbV. Upon phosphorylation of RsbV, RsbW is released and binds to sigma-B, thereby blocking its ability to form an RNA polymerase holoenzyme (E-sigma-B). The polypeptide is Serine-protein kinase RsbW (Listeria monocytogenes serovar 1/2a (strain ATCC BAA-679 / EGD-e)).